Consider the following 207-residue polypeptide: dTTP/UTP pyrophosphatase (207 aa).

Catalysis depends on Asp-79, which acts as the Proton acceptor.

It belongs to the Maf family. YhdE subfamily. It depends on a divalent metal cation as a cofactor.

Its subcellular location is the cytoplasm. It carries out the reaction dTTP + H2O = dTMP + diphosphate + H(+). The catalysed reaction is UTP + H2O = UMP + diphosphate + H(+). Its function is as follows. Nucleoside triphosphate pyrophosphatase that hydrolyzes dTTP and UTP. May have a dual role in cell division arrest and in preventing the incorporation of modified nucleotides into cellular nucleic acids. The protein is dTTP/UTP pyrophosphatase of Rhodopseudomonas palustris (strain HaA2).